Consider the following 443-residue polypeptide: Tryptophan synthase beta chain 2, chloroplastic (443 aa).

The tract at residues 1–32 (PGPPPPAPEGRRRRGRGRNAAGQAVAAEASPA) is disordered. The N-terminal 45 residues, 1-45 (PGPPPPAPEGRRRRGRGRNAAGQAVAAEASPAAVEMGNGAAAPGL), are a transit peptide targeting the chloroplast. Positions 18–32 (RNAAGQAVAAEASPA) are enriched in low complexity. K138 bears the N6-(pyridoxal phosphate)lysine mark.

It belongs to the TrpB family. Tetramer of two alpha and two beta chains. The cofactor is pyridoxal 5'-phosphate.

Its subcellular location is the plastid. The protein resides in the chloroplast. It catalyses the reaction (1S,2R)-1-C-(indol-3-yl)glycerol 3-phosphate + L-serine = D-glyceraldehyde 3-phosphate + L-tryptophan + H2O. It participates in amino-acid biosynthesis; L-tryptophan biosynthesis; L-tryptophan from chorismate: step 5/5. The beta subunit is responsible for the synthesis of L-tryptophan from indole and L-serine. The polypeptide is Tryptophan synthase beta chain 2, chloroplastic (TSB2) (Zea mays (Maize)).